The primary structure comprises 740 residues: Copalyl diphosphate synthase 2 (740 aa).

Position 154 (lysine 154) interacts with substrate. Residues aspartate 287 and aspartate 289 each contribute to the Mg(2+) site. A DXDD motif motif is present at residues 287–290 (DADD). Lysine 373 provides a ligand contact to substrate.

It belongs to the terpene synthase family. Mg(2+) is required as a cofactor.

The catalysed reaction is (2E,6E,10E)-geranylgeranyl diphosphate = (+)-copalyl diphosphate. Its pathway is secondary metabolite biosynthesis; terpenoid biosynthesis. Its function is as follows. Monofunctional diterpene synthase converting geranylgeranyl diphosphate to copalyl diphosphate. The sequence is that of Copalyl diphosphate synthase 2 (CPS2) from Selaginella moellendorffii (Spikemoss).